A 554-amino-acid polypeptide reads, in one-letter code: Gamma-aminobutyric acid receptor subunit alpha-4 (554 aa).

Positions 1 to 35 (MVSAKKVPAIALSAGVSFALLRFLCLAVCLNESPG) are cleaved as a signal peptide. Topologically, residues 36–259 (QNQKEEKLCT…FHLRRKMGYF (224 aa)) are extracellular. Residue N47 is glycosylated (N-linked (GlcNAc...) asparagine). R100 contributes to the 4-aminobutanoate binding site. N144 and N157 each carry an N-linked (GlcNAc...) asparagine glycan. T163 contacts 4-aminobutanoate. Residues C172 and C186 are joined by a disulfide bond. Residues 260–280 (MIQTYIPCIMTVILSQVSFWI) form a helical membrane-spanning segment. Over 281-284 (NKES) the chain is Cytoplasmic. A helical transmembrane segment spans residues 285 to 305 (VPARTVFGITTVLTMTTLSIS). Residues 306–318 (ARHSLPKVSYATA) lie on the Extracellular side of the membrane. A helical membrane pass occupies residues 319–341 (MDWFIAVCFAFVFSALIEFAAVN). The Cytoplasmic portion of the chain corresponds to 342–517 (YFTNIQMEKA…PPPSGSGTSK (176 aa)). Disordered regions lie at residues 350–381 (KAKR…QNTN), 397–435 (ESDV…SPNP), 452–471 (PSAS…ASVG), and 495–515 (ATGK…GSGT). Residues 410-422 (SSKSSTVVQESSK) are compositionally biased toward low complexity. Residues 502–511 (TPPPSAPPPS) show a composition bias toward pro residues. A helical membrane pass occupies residues 518-540 (IDKYARILFPVTFGAFNMVYWVV). The Extracellular segment spans residues 541 to 554 (YLSKDTMEKSESLM).

The protein belongs to the ligand-gated ion channel (TC 1.A.9) family. Gamma-aminobutyric acid receptor (TC 1.A.9.5) subfamily. GABRA4 sub-subfamily. As to quaternary structure, heteropentamer, formed by a combination of alpha (GABRA1-6), beta (GABRB1-3), gamma (GABRG1-3), delta (GABRD), epsilon (GABRE), rho (GABRR1-3), pi (GABRP) and theta (GABRQ) chains, each subunit exhibiting distinct physiological and pharmacological properties. As to expression, expressed in the brain.

Its subcellular location is the cell membrane. The protein resides in the postsynaptic cell membrane. The enzyme catalyses chloride(in) = chloride(out). Its activity is regulated as follows. Potentiated by histamine. In terms of biological role, alpha subunit of the heteropentameric ligand-gated chloride channel gated by gamma-aminobutyric acid (GABA), a major inhibitory neurotransmitter in the brain. GABA-gated chloride channels, also named GABA(A) receptors (GABAAR), consist of five subunits arranged around a central pore and contain GABA active binding site(s) located at the alpha and beta subunit interface(s). When activated by GABA, GABAARs selectively allow the flow of chloride anions across the cell membrane down their electrochemical gradient. GABAARs containing alpha-4 are predominantly extrasynaptic, contributing to tonic inhibition in dentate granule cells and thalamic relay neurons. Extrasynaptic alpha-4-containing GABAARs control levels of excitability and network activity. GABAAR containing alpha-4-beta-3-delta subunits can simultaneously bind GABA and histamine where histamine binds at the interface of two neighboring beta subunits, which may be involved in the regulation of sleep and wakefulness. In Homo sapiens (Human), this protein is Gamma-aminobutyric acid receptor subunit alpha-4.